Here is a 368-residue protein sequence, read N- to C-terminus: UPF0284 protein Cyan7425_0342 (368 aa).

This sequence belongs to the UPF0284 family.

In Cyanothece sp. (strain PCC 7425 / ATCC 29141), this protein is UPF0284 protein Cyan7425_0342.